Reading from the N-terminus, the 79-residue chain is MGGWSSPSHWLIILLIVVLLFGAKKIPELAKGLGKGIKTFKDEMNNDDEVAKNTQKIEENKNTTNNTNADASIDETKKA.

A helical membrane pass occupies residues 1 to 21; it reads MGGWSSPSHWLIILLIVVLLF. Residues 49 to 61 show a composition bias toward basic and acidic residues; the sequence is EVAKNTQKIEENK. Residues 49-79 form a disordered region; it reads EVAKNTQKIEENKNTTNNTNADASIDETKKA.

This sequence belongs to the TatA/E family. As to quaternary structure, the Tat system comprises two distinct complexes: a TatABC complex, containing multiple copies of TatA, TatB and TatC subunits, and a separate TatA complex, containing only TatA subunits. Substrates initially bind to the TatABC complex, which probably triggers association of the separate TatA complex to form the active translocon.

Its subcellular location is the cell inner membrane. Functionally, part of the twin-arginine translocation (Tat) system that transports large folded proteins containing a characteristic twin-arginine motif in their signal peptide across membranes. TatA could form the protein-conducting channel of the Tat system. This chain is Sec-independent protein translocase protein TatA, found in Campylobacter jejuni subsp. doylei (strain ATCC BAA-1458 / RM4099 / 269.97).